The following is an 813-amino-acid chain: LPS-assembly protein LptD (813 aa).

Residues 1–22 form the signal peptide; it reads MRRALRLLPLPLSIAICLPAMA.

The protein belongs to the LptD family. As to quaternary structure, component of the lipopolysaccharide transport and assembly complex. Interacts with LptE and LptA.

The protein localises to the cell outer membrane. In terms of biological role, together with LptE, is involved in the assembly of lipopolysaccharide (LPS) at the surface of the outer membrane. The chain is LPS-assembly protein LptD from Xanthomonas axonopodis pv. citri (strain 306).